The chain runs to 153 residues: NAD(P)H-quinone oxidoreductase subunit N (153 aa).

The protein belongs to the complex I NdhN subunit family. As to quaternary structure, NDH-1 can be composed of about 15 different subunits; different subcomplexes with different compositions have been identified which probably have different functions.

The protein resides in the cellular thylakoid membrane. It catalyses the reaction a plastoquinone + NADH + (n+1) H(+)(in) = a plastoquinol + NAD(+) + n H(+)(out). It carries out the reaction a plastoquinone + NADPH + (n+1) H(+)(in) = a plastoquinol + NADP(+) + n H(+)(out). NDH-1 shuttles electrons from an unknown electron donor, via FMN and iron-sulfur (Fe-S) centers, to quinones in the respiratory and/or the photosynthetic chain. The immediate electron acceptor for the enzyme in this species is believed to be plastoquinone. Couples the redox reaction to proton translocation, and thus conserves the redox energy in a proton gradient. Cyanobacterial NDH-1 also plays a role in inorganic carbon-concentration. The polypeptide is NAD(P)H-quinone oxidoreductase subunit N (Synechococcus sp. (strain RCC307)).